A 120-amino-acid polypeptide reads, in one-letter code: Non-specific lipid-transfer protein (120 aa).

An N-terminal signal peptide occupies residues 1–26 (MGVLRSSFVAMMVMYMVLATTPNAEA). Intrachain disulfides connect cysteine 30/cysteine 79, cysteine 40/cysteine 56, cysteine 57/cysteine 102, and cysteine 77/cysteine 116.

The protein belongs to the plant LTP family. Expressed in protoderm cells of somatic and zygotic embryos, and transiently expressed in epidermal cell layers of leaves, flowers and seeds.

Functionally, plant non-specific lipid-transfer proteins transfer phospholipids as well as galactolipids across membranes. May play a role in wax or cutin deposition in the cell walls of expanding epidermal cells and certain secretory tissues. This Daucus carota (Wild carrot) protein is Non-specific lipid-transfer protein (EP2).